Reading from the N-terminus, the 208-residue chain is Large ribosomal subunit protein uL4 (208 aa).

The segment at 46–84 is disordered; sequence QGTHKAKTRAEVRGGGRKPFRQKGTGNARQGSTRSPLMI. The span at 69–80 shows a compositional bias: polar residues; it reads GTGNARQGSTRS.

The protein belongs to the universal ribosomal protein uL4 family. In terms of assembly, part of the 50S ribosomal subunit.

In terms of biological role, one of the primary rRNA binding proteins, this protein initially binds near the 5'-end of the 23S rRNA. It is important during the early stages of 50S assembly. It makes multiple contacts with different domains of the 23S rRNA in the assembled 50S subunit and ribosome. Its function is as follows. Forms part of the polypeptide exit tunnel. In Chlorobium limicola (strain DSM 245 / NBRC 103803 / 6330), this protein is Large ribosomal subunit protein uL4.